A 496-amino-acid chain; its full sequence is Palmitoleoyl-protein carboxylesterase NOTUM (496 aa).

Positions 1 to 19 (MGRGVRVLLLLSLLHCAGG) are cleaved as a signal peptide. Residues 21-46 (EGRKTWRRRGQQPPPPPRTEAAPAAG) form a disordered region. At serine 81 the chain carries Phosphoserine; by FAM20C. Residue asparagine 96 is glycosylated (N-linked (GlcNAc...) asparagine). Catalysis depends on charge relay system residues serine 232, aspartate 340, and histidine 389.

It belongs to the pectinacetylesterase family. Notum subfamily. Rarely expressed in adult normal tissues.

Its subcellular location is the secreted. It carries out the reaction [Wnt protein]-O-(9Z)-hexadecenoyl-L-serine + H2O = [Wnt protein]-L-serine + (9Z)-hexadecenoate + H(+). Functionally, carboxylesterase that acts as a key negative regulator of the Wnt signaling pathway by specifically mediating depalmitoleoylation of WNT proteins. Serine palmitoleoylation of WNT proteins is required for efficient binding to frizzled receptors. In Homo sapiens (Human), this protein is Palmitoleoyl-protein carboxylesterase NOTUM.